We begin with the raw amino-acid sequence, 190 residues long: Putative acetyltransferase DDB_G0275913 (190 aa).

This sequence belongs to the transferase hexapeptide repeat family.

This Dictyostelium discoideum (Social amoeba) protein is Putative acetyltransferase DDB_G0275913.